A 490-amino-acid chain; its full sequence is ATP synthase subunit beta, chloroplastic (490 aa).

170–177 (GGXGVGKT) provides a ligand contact to ATP.

Belongs to the ATPase alpha/beta chains family. In terms of assembly, F-type ATPases have 2 components, CF(1) - the catalytic core - and CF(0) - the membrane proton channel. CF(1) has five subunits: alpha(3), beta(3), gamma(1), delta(1), epsilon(1). CF(0) has four main subunits: a(1), b(1), b'(1) and c(9-12).

The protein resides in the plastid. Its subcellular location is the chloroplast thylakoid membrane. The catalysed reaction is ATP + H2O + 4 H(+)(in) = ADP + phosphate + 5 H(+)(out). Its function is as follows. Produces ATP from ADP in the presence of a proton gradient across the membrane. The catalytic sites are hosted primarily by the beta subunits. The polypeptide is ATP synthase subunit beta, chloroplastic (Ipomoea coccinea (Scarlet morning-glory)).